Consider the following 58-residue polypeptide: Small ribosomal subunit protein bS21 (58 aa).

This sequence belongs to the bacterial ribosomal protein bS21 family.

The chain is Small ribosomal subunit protein bS21 from Picosynechococcus sp. (strain ATCC 27264 / PCC 7002 / PR-6) (Agmenellum quadruplicatum).